Here is a 495-residue protein sequence, read N- to C-terminus: Cyclic GMP-AMP synthase (495 aa).

The disordered stretch occupies residues 1 to 128 (MAARRGKSTR…AGATELAAPA (128 aa)). Positions 1-134 (MAARRGKSTR…AAPARMEAPP (134 aa)) are DNA-binding. Position 7 is an N6-acetyllysine (Lys-7). Ser-13 is modified (phosphoserine). Composition is skewed to basic and acidic residues over residues 52–76 (CRRE…RAED) and 105–116 (RAREARSARELR). Position 56 is an N6-acetyllysine (Lys-56). Ser-57 carries the phosphoserine modification. Residues 57–68 (SGPDPREKPQVR) form a required for association with the cell membrane region. The interval 103-134 (SCRAREARSARELRPQAGATELAAPARMEAPP) is required for activation upon DNA viral infection. A Nuclear export signal motif is present at residues 143–148 (LEKVRL). The residue at position 145 (Lys-145) is an N6-lactoyllysine. The tract at residues 147-190 (RLSRHEISEAAEVVNWVVEHLLRRLQGGESEFKGVALLRTGSYY) is DNA-binding. Glu-165 bears the PolyADP-ribosyl glutamic acid mark. Position 186 (Thr-186) interacts with GTP. Ser-188 is modified (phosphoserine). Ser-188 contacts ATP. Tyr-190 is subject to Phosphotyrosine. Mg(2+) is bound by residues Glu-200 and Asp-202. Asp-202 is a binding site for 2',3'-cGAMP. Lys-206 participates in a covalent cross-link: Glycyl lysine isopeptide (Lys-Gly) (interchain with G-Cter in SUMO). A Glycyl lysine isopeptide (Lys-Gly) (interchain with G-Cter in ubiquitin) cross-link involves residue Lys-260. Residue Glu-261 is modified to 5-glutamyl polyglutamate. A Nuclear localization signal motif is present at residues 268–278 (GVTVERKRRGS). Position 278 is a phosphoserine (Ser-278). Asp-294 contacts GTP. Asp-294 is a binding site for Mg(2+). Position 294 (Asp-294) interacts with 2',3'-cGAMP. Positions 316–357 (SQWLGAKVKNNLKRQPFYLVPKHAKEGSGFQEETWRLSFSHI) are interaction with collided ribosomes. Residue Lys-322 forms a Glycyl lysine isopeptide (Lys-Gly) (interchain with G-Cter in SUMO); alternate linkage. Lys-322 participates in a covalent cross-link: Glycyl lysine isopeptide (Lys-Gly) (interchain with G-Cter in ubiquitin); alternate. Residues Lys-337 and Arg-351 each contribute to the 2',3'-cGAMP site. Position 351–358 (351–358 (RLSFSHIE)) interacts with GTP. Glu-358 contacts ATP. At Lys-359 the chain carries N6-acetyllysine. Residue Lys-359 forms a Glycyl lysine isopeptide (Lys-Gly) (interchain with G-Cter in SUMO); alternate linkage. Residue Lys-359 forms a Glycyl lysine isopeptide (Lys-Gly) (interchain with G-Cter in ubiquitin); alternate linkage. Positions 359 to 382 (KDILKNHGQSKTCCEIDGVKCCRK) are DNA-binding. Position 365 (His-365) interacts with Zn(2+). Lys-369 is subject to N6-acetyllysine. A Glycyl lysine isopeptide (Lys-Gly) (interchain with G-Cter in SUMO) cross-link involves residue Lys-369. Cys-371, Cys-372, and Cys-379 together coordinate Zn(2+). S-palmitoyl cysteine attachment occurs at residues Cys-379 and Cys-380. Residues Lys-386, Lys-389, Lys-396, and Lys-397 each participate in a glycyl lysine isopeptide (Lys-Gly) (interchain with G-Cter in ubiquitin) cross-link. N6-acetyllysine is present on Lys-389. Residue Lys-389 participates in ATP binding. Ser-410 carries the phosphoserine modification. ATP is bound at residue 410–414 (SYHVK). Cys-449 carries S-palmitoyl cysteine lipidation. Lys-481 carries the post-translational modification N6-methyllysine.

This sequence belongs to the mab-21 family. Monomer in the absence of DNA. Homodimer in presence of dsDNA: forms a 2:2 dimer with two enzymes binding to two DNA molecules. Interacts with nucleosomes; interaction is mainly mediated via histones H2A and H2B and inactivates the nucleotidyltransferase activity by blocking DNA-binding and subsequent activation. Interacts with PQBP1 (via WW domain). Interacts with TRIM14; this interaction recruits USP14, leading to deubiquitinate and stabilize CGAS and promote type I interferon production. Interacts with ZCCHC3; promoting sensing of dsDNA by CGAS. Interacts (when not monomethylated) with (poly-ADP-ribosylated) PARP1; interaction takes place in the nucleus and prevents the formation of the PARP1-TIMELESS complex. Interacts (when monomethylated) with SGF29; interaction with SGF29 prevents interaction with PARP1. Interacts with PCBP2; preventing the formation of liquid-like droplets in which CGAS is activated. Interacts with IRGM; promoting CGAS degradation. Mg(2+) serves as cofactor. It depends on Mn(2+) as a cofactor. The cofactor is Zn(2+). The N-terminal disordered part (1-134) is phosphorylated by AURKB during the G2-M transition, blocking CGAS liquid phase separation and preventing activation. Phosphorylation at Tyr-190 by BLK promotes cytosolic retention. Localizes into the nucleus following dephosphorylation at Tyr-190. Phosphorylation at Ser-410 activates the nucleotidyltransferase activity. Dephosphorylation at Ser-410 by PPP6C impairs its ability to bind GTP, thereby inactivating it. Phosphorylation at Ser-188 by PRKDC inhibits its cyclic GMP-AMP synthase activity by impairing homodimerization and activation. Phosphorylation at Ser-278 by AKT (AKT1, AKT2 or AKT3) suppresses the nucleotidyltransferase activity. Phosphorylation at Ser-278 by CDK1 during mitosis leads to its inhibition, thereby preventing CGAS activation by self-DNA during mitosis. Dephosphorylated at Ser-278 by protein phosphatase PP1 upon mitotic exit. Post-translationally, ubiquitinated at Lys-389 via 'Lys-48'-linked polyubiquitin chains, leading to its SQSTM1-mediated autophagic degradation. Interaction with TRIM14 promotes recruitment of USP14, leading to deubiquitinate Lys-389 and stabilize CGAS. Ubiquitinated at Lys-359 by RNF185 via 'Lys-27'-linked polyubiquitination, promoting CGAS cyclic GMP-AMP synthase activity. Monoubiquitination at Lys-322 by TRIM56 promotes oligomerization and subsequent activation. Monoubiquitination by TRIM41 promotes CGAS activation. Ubiquitination at Lys-260 via 'Lys-48'-linked polyubiquitination promotes its degradation. Deubiquitination at Lys-260 by USP29 promotes its stabilization. Deubiquitinated by USP27X, promoting its stabilization. Ubiquitinated at Lys-386 via 'Lys-63'-linked polyubiquitin chains by MARCHF8, leading to the inhibition of its DNA binding ability. In cycling cells, nucleosome-bound CGAS is ubiquitinated at Lys-396 and Lys-397 via 'Lys-48'-linked polyubiquitin chains by the ECS(SPSB3) complex, leading to its degradation: ubiquitination and degradation of nuclear CGAS during G1 and G2 phases is required to promote low intranuclear CGAS abundance before the next mitotic cycle. In terms of processing, sumoylated at Lys-206 by TRIM38 in uninfected cells and during the early phase of viral infection, promoting its stability by preventing ubiquitination at Lys-260 and subsequent degradation. Desumoylated by SENP2 during the late phase of viral infection. Sumoylation at Lys-322, Lys-359 and Lys-369 prevents DNA-binding, oligomerization and nucleotidyltransferase activity. Desumoylation at Lys-322, Lys-359 and Lys-369 by SENP7 relieves inhibition and activates CGAS. Polyglutamylated by TTLL6 at Glu-261, leading to impair DNA-binding activity. Deglutamylated by AGBL5/CCP5 and AGBL6/CCP6. Post-translationally, acetylation at Lys-359, Lys-369 and Lys-389 inhibits the cyclic GMP-AMP synthase activity. Deacetylated upon cytosolic DNA challenge such as viral infections. Acetylation by KAT5 increases the cyclic GMP-AMP synthase activity by promoting DNA-binding and subsequent activation. In terms of processing, proteolytically cleaved by apoptotic caspases during apoptosis, leading to its inactivation. The damage of the nucleus and the mitochondria during apoptosis leads to leakage of nuclear and mitochondrial DNA, which activate CGAS: cleavage and inactivation during apoptosis in required to prevent cytokine overproduction. Cleaved by CASP7 and CASP3 during virus-induced apoptosis, thereby inactivating it and preventing cytokine overproduction. Cleaved by CASP1 upon DNA virus infection; the cleavage impairs cGAMP production. Also cleaved by the pyroptotic CASP4 during non-canonical inflammasome activation; does not cut at the same sites than CASP1. Degraded via selective autophagy following interaction with IRGM. IRGM promotes CGAS recruitment to autophagosome membranes, promoting its SQSTM1/p62-dependent autophagic degradation. Post-translationally, poly-ADP-ribosylation at Glu-165 by PARP1 impairs DNA-binding, thereby preventing the cyclic GMP-AMP synthase activity. In terms of processing, palmitoylation at Cys-449 by ZDHHC18 impairs DNA-binding, thereby preventing the cyclic GMP-AMP synthase activity. Palmitoylation at Cys-379 and Cys-380 by ZDHHC9 promotes homodimerization and cyclic GMP-AMP synthase activity. Depalmitoylation at Cys-379 and Cys-380 by LYPLAL1 impairs homodimerization and cyclic GMP-AMP synthase activity. Monomethylated at Lys-481 by SETD7. Monomethylation promotes interaction with SGF29, preventing interaction between PARP1 nad SGF29. Demethylation by RIOX1 promotes interaction with PARP1, followed by PARP1 inactivation. Post-translationally, lactylation by AARS2 prevents ability to undergo liquid-liquid phase separation (LLPS), thereby inhibiting CGAS activation.

Its subcellular location is the nucleus. The protein resides in the chromosome. It is found in the cell membrane. The protein localises to the cytoplasm. It localises to the cytosol. It carries out the reaction GTP + ATP = 2',3'-cGAMP + 2 diphosphate. It catalyses the reaction GTP + ATP = pppGp(2'-5')A + diphosphate. The enzyme catalyses pppGp(2'-5')A = 2',3'-cGAMP + diphosphate. With respect to regulation, the enzyme activity is strongly increased by double-stranded DNA (dsDNA), but not by single-stranded DNA or RNA. DNA-binding induces the formation of liquid-like droplets in which CGAS is activated. Liquid-like droplets also create a selective environment that restricts entry of negative regulators, such as TREX1 or BANF1/BAF, allowing sensing of DNA. A number of mechanisms exist to restrict its activity toward self-DNA. The nucleotidyltransferase activity is inhibited in the nucleus via its association with nucleosomes: interacts with the acidic patch of histones H2A and H2B, thereby blocking DNA-binding and subsequent activation. CGAS is also inactive when associated with mitotic chromatin. Chromatin-bound CGAS cannot be activated by exogenous DNA in mitotic cells: phosphorylation of the N-terminal disordered part by AURKB during the G2-M transition blocks CGAS liquid phase separation and activation. Activity toward self-DNA is inhibited by BANF1/BAF upon acute loss of nuclear membrane integrity: BANF1/BAF acts by outcompeting CGAS for DNA-binding, thereby preventing CGAS activation. DNA-induced activation at micronuclei is also limited by TREX1, which degrades micronuclear DNA upon nuclear envelope rupture, thereby preventing CGAS activation. CGAS can be released from nucleosomes and activated by MRE11 component of the MRN complex, which displaces CGAS from acidic-patch-mediated sequestration. Acetylation at Lys-359, Lys-369 and Lys-389 inhibits the cyclic GMP-AMP synthase activity. Acetylation by KAT5 increases the cyclic GMP-AMP synthase activity by promoting DNA-binding and subsequent activation. Phosphorylation at Ser-278 suppresses the nucleotidyltransferase activity. Phosphorylation at Ser-410 promotes the cyclic GMP-AMP synthase activity. Phosphorylation at Ser-188 inhibits its cyclic GMP-AMP synthase activity. Ubiquitination at Lys-359 via 'Lys-27'-linked polyubiquitination enhances the cyclic GMP-AMP synthase activity. Monoubiquitination at Lys-322 promotes oligomerization and subsequent activation. Sumoylation at Lys-322, Lys-359 and Lys-369 prevents DNA-binding, oligomerization and nucleotidyltransferase activity. The enzyme activity is impaired by the cleavage by CASP1. In addition to DNA, also activated by collided ribosomes upon translation stress: specifically binds collided ribosomes, promoting its activation and triggering type-I interferon production. Its function is as follows. Nucleotidyltransferase that catalyzes the formation of cyclic GMP-AMP (2',3'-cGAMP) from ATP and GTP and plays a key role in innate immunity. Catalysis involves both the formation of a 2',5' phosphodiester linkage at the GpA step and the formation of a 3',5' phosphodiester linkage at the ApG step, producing c[G(2',5')pA(3',5')p]. Acts as a key DNA sensor: directly binds double-stranded DNA (dsDNA), inducing the formation of liquid-like droplets in which CGAS is activated, leading to synthesis of 2',3'-cGAMP, a second messenger that binds to and activates STING1, thereby triggering type-I interferon production. Preferentially binds long dsDNA (around 45 bp) and forms ladder-like networks that function cooperatively to stabilize individual cGAS-dsDNA complexes. Acts as a key foreign DNA sensor, the presence of double-stranded DNA (dsDNA) in the cytoplasm being a danger signal that triggers the immune responses. Has antiviral activity by sensing the presence of dsDNA from DNA viruses in the cytoplasm. Also acts as an innate immune sensor of infection by retroviruses by detecting the presence of reverse-transcribed DNA in the cytosol. Detection of retroviral reverse-transcribed DNA in the cytosol may be indirect and be mediated via interaction with PQBP1, which directly binds reverse-transcribed retroviral DNA. Also detects the presence of DNA from bacteria. 2',3'-cGAMP can be transferred from producing cells to neighboring cells through gap junctions, leading to promote STING1 activation and convey immune response to connecting cells. 2',3'-cGAMP can also be transferred between cells by virtue of packaging within viral particles contributing to IFN-induction in newly infected cells in a cGAS-independent but STING1-dependent manner. Also senses the presence of neutrophil extracellular traps (NETs) that are translocated to the cytosol following phagocytosis, leading to synthesis of 2',3'-cGAMP. In addition to foreign DNA, can also be activated by endogenous nuclear or mitochondrial DNA. When self-DNA leaks into the cytosol during cellular stress (such as mitochondrial stress, DNA damage, mitotic arrest or senescence), or is present in form of cytosolic micronuclei, CGAS is activated leading to a state of sterile inflammation. Acts as a regulator of cellular senescence by binding to cytosolic chromatin fragments that are present in senescent cells, leading to trigger type-I interferon production via STING1 and promote cellular senescence. Also involved in the inflammatory response to genome instability and double-stranded DNA breaks: acts by localizing to micronuclei arising from genome instability. Micronuclei, which are frequently found in cancer cells, consist of chromatin surrounded by their own nuclear membrane: following breakdown of the micronuclear envelope, a process associated with chromothripsis, CGAS binds self-DNA exposed to the cytosol, leading to 2',3'-cGAMP synthesis and subsequent activation of STING1 and type-I interferon production. In a healthy cell, CGAS is however kept inactive even in cellular events that directly expose it to self-DNA, such as mitosis, when cGAS associates with chromatin directly after nuclear envelope breakdown or remains in the form of postmitotic persistent nuclear cGAS pools bound to chromatin. Nuclear CGAS is inactivated by chromatin via direct interaction with nucleosomes, which block CGAS from DNA binding and thus prevent CGAS-induced autoimmunity. Also acts as a suppressor of DNA repair in response to DNA damage: inhibits homologous recombination repair by interacting with PARP1, the CGAS-PARP1 interaction leading to impede the formation of the PARP1-TIMELESS complex. In addition to DNA, also sense translation stress: in response to translation stress, translocates to the cytosol and associates with collided ribosomes, promoting its activation and triggering type-I interferon production. In Sus scrofa (Pig), this protein is Cyclic GMP-AMP synthase.